A 212-amino-acid polypeptide reads, in one-letter code: Phosphatidylserine decarboxylase proenzyme (212 aa).

The active-site Schiff-base intermediate with substrate; via pyruvic acid is the S182. S182 is subject to Pyruvic acid (Ser); by autocatalysis.

It belongs to the phosphatidylserine decarboxylase family. PSD-A subfamily. Heterodimer of a large membrane-associated beta subunit and a small pyruvoyl-containing alpha subunit. It depends on pyruvate as a cofactor. Is synthesized initially as an inactive proenzyme. Formation of the active enzyme involves a self-maturation process in which the active site pyruvoyl group is generated from an internal serine residue via an autocatalytic post-translational modification. Two non-identical subunits are generated from the proenzyme in this reaction, and the pyruvate is formed at the N-terminus of the alpha chain, which is derived from the carboxyl end of the proenzyme. The post-translation cleavage follows an unusual pathway, termed non-hydrolytic serinolysis, in which the side chain hydroxyl group of the serine supplies its oxygen atom to form the C-terminus of the beta chain, while the remainder of the serine residue undergoes an oxidative deamination to produce ammonia and the pyruvoyl prosthetic group on the alpha chain.

The protein resides in the cell membrane. The enzyme catalyses a 1,2-diacyl-sn-glycero-3-phospho-L-serine + H(+) = a 1,2-diacyl-sn-glycero-3-phosphoethanolamine + CO2. It participates in phospholipid metabolism; phosphatidylethanolamine biosynthesis; phosphatidylethanolamine from CDP-diacylglycerol: step 2/2. Functionally, catalyzes the formation of phosphatidylethanolamine (PtdEtn) from phosphatidylserine (PtdSer). The polypeptide is Phosphatidylserine decarboxylase proenzyme (Paraburkholderia phytofirmans (strain DSM 17436 / LMG 22146 / PsJN) (Burkholderia phytofirmans)).